We begin with the raw amino-acid sequence, 375 residues long: Neutral protease 2 homolog MGYG_00813 (375 aa).

An N-terminal signal peptide occupies residues M1–G19. Residues F20 to R190 constitute a propeptide that is removed on maturation. Intrachain disulfides connect C198–C268 and C275–C293. H318 is a Zn(2+) binding site. E319 is an active-site residue. H322 and D333 together coordinate Zn(2+).

The protein belongs to the peptidase M35 family. Requires Zn(2+) as cofactor.

The protein resides in the secreted. The enzyme catalyses Preferential cleavage of bonds with hydrophobic residues in P1'. Also 3-Asn-|-Gln-4 and 8-Gly-|-Ser-9 bonds in insulin B chain.. Its function is as follows. Secreted metalloproteinase that allows assimilation of proteinaceous substrates. Shows high activities on basic nuclear substrates such as histone and protamine. May be involved in virulence. The polypeptide is Neutral protease 2 homolog MGYG_00813 (Arthroderma gypseum (strain ATCC MYA-4604 / CBS 118893) (Microsporum gypseum)).